The chain runs to 174 residues: Crossover junction endodeoxyribonuclease RuvC (174 aa).

Active-site residues include Asp8, Glu68, and Asp140. Asp8, Glu68, and Asp140 together coordinate Mg(2+).

This sequence belongs to the RuvC family. Homodimer which binds Holliday junction (HJ) DNA. The HJ becomes 2-fold symmetrical on binding to RuvC with unstacked arms; it has a different conformation from HJ DNA in complex with RuvA. In the full resolvosome a probable DNA-RuvA(4)-RuvB(12)-RuvC(2) complex forms which resolves the HJ. Mg(2+) is required as a cofactor.

The protein resides in the cytoplasm. It carries out the reaction Endonucleolytic cleavage at a junction such as a reciprocal single-stranded crossover between two homologous DNA duplexes (Holliday junction).. Functionally, the RuvA-RuvB-RuvC complex processes Holliday junction (HJ) DNA during genetic recombination and DNA repair. Endonuclease that resolves HJ intermediates. Cleaves cruciform DNA by making single-stranded nicks across the HJ at symmetrical positions within the homologous arms, yielding a 5'-phosphate and a 3'-hydroxyl group; requires a central core of homology in the junction. The consensus cleavage sequence is 5'-(A/T)TT(C/G)-3'. Cleavage occurs on the 3'-side of the TT dinucleotide at the point of strand exchange. HJ branch migration catalyzed by RuvA-RuvB allows RuvC to scan DNA until it finds its consensus sequence, where it cleaves and resolves the cruciform DNA. This chain is Crossover junction endodeoxyribonuclease RuvC, found in Legionella pneumophila (strain Corby).